A 189-amino-acid polypeptide reads, in one-letter code: Apolipoprotein D (189 aa).

The signal sequence occupies residues 1 to 20 (MVPVLLLLPALAGLFGAAEG). Q21 is modified (pyrrolidone carboxylic acid). 2 disulfides stabilise this stretch: C28-C134 and C61-C185. 2 N-linked (GlcNAc...) asparagine glycosylation sites follow: N65 and N98.

It belongs to the calycin superfamily. Lipocalin family. In terms of assembly, homodimer.

Its subcellular location is the secreted. APOD occurs in the macromolecular complex with lecithin-transport and binding of bilin. Appears to be able to transport a variety of ligands in a number of different contexts. The chain is Apolipoprotein D (APOD) from Bos taurus (Bovine).